Here is a 416-residue protein sequence, read N- to C-terminus: RNA polymerase sigma factor SigA (416 aa).

Residues 184 to 254 (MVQSNLRLVV…TRAIADQSRT (71 aa)) form a sigma-70 factor domain-2 region. Positions 208-211 (DLIQ) match the Interaction with polymerase core subunit RpoC motif. A sigma-70 factor domain-3 region spans residues 263-338 (ETISRIKKTT…EADGETPEDE (76 aa)). Positions 351–404 (VLDTLSPRERDVLRLRYGLDDGRMKTLEEIGQIFNVTRERIRQIEAKALRKLRH) are sigma-70 factor domain-4. A DNA-binding region (H-T-H motif) is located at residues 377–396 (LEEIGQIFNVTRERIRQIEA).

Belongs to the sigma-70 factor family. RpoD/SigA subfamily. In terms of assembly, interacts transiently with the RNA polymerase catalytic core.

Its subcellular location is the cytoplasm. Sigma factors are initiation factors that promote the attachment of RNA polymerase to specific initiation sites and are then released. This sigma factor is the primary sigma factor during exponential growth. This Microcystis aeruginosa protein is RNA polymerase sigma factor SigA.